Here is a 199-residue protein sequence, read N- to C-terminus: Pyridoxine/pyridoxamine 5'-phosphate oxidase (199 aa).

FMN is bound by residues 45 to 50 (RVVLLK), 60 to 61 (FT), Arg-66, Lys-67, and Gln-89. Substrate is bound at residue Lys-50. Tyr-107, Arg-111, and Ser-115 together coordinate substrate. FMN is bound by residues 124-125 (QS) and Trp-169. 175–177 (RIH) provides a ligand contact to substrate. Arg-179 is a binding site for FMN.

This sequence belongs to the pyridoxamine 5'-phosphate oxidase family. As to quaternary structure, homodimer. The cofactor is FMN.

It carries out the reaction pyridoxamine 5'-phosphate + O2 + H2O = pyridoxal 5'-phosphate + H2O2 + NH4(+). It catalyses the reaction pyridoxine 5'-phosphate + O2 = pyridoxal 5'-phosphate + H2O2. Its pathway is cofactor metabolism; pyridoxal 5'-phosphate salvage; pyridoxal 5'-phosphate from pyridoxamine 5'-phosphate: step 1/1. The protein operates within cofactor metabolism; pyridoxal 5'-phosphate salvage; pyridoxal 5'-phosphate from pyridoxine 5'-phosphate: step 1/1. In terms of biological role, catalyzes the oxidation of either pyridoxine 5'-phosphate (PNP) or pyridoxamine 5'-phosphate (PMP) into pyridoxal 5'-phosphate (PLP). In Ehrlichia chaffeensis (strain ATCC CRL-10679 / Arkansas), this protein is Pyridoxine/pyridoxamine 5'-phosphate oxidase.